The chain runs to 667 residues: Cysteine-rich receptor-like protein kinase 11 (667 aa).

Residues 1–24 form the signal peptide; the sequence is MKQRSLFSVLCFFFISFGVASVSA. 2 consecutive Gnk2-homologous domains span residues 25–129 and 135–248; these read QTCT…NTSF and LNPR…LYTY. At 25–292 the chain is on the extracellular side; the sequence is QTCTTDKGTF…SKGISAGVVV (268 aa). Residues Asn-37, Asn-54, Asn-64, Asn-106, Asn-126, Asn-150, and Asn-254 are each glycosylated (N-linked (GlcNAc...) asparagine). The segment covering 259 to 268 has biased composition (pro residues); that stretch reads SPPPEPPVTV. The tract at residues 259–282 is disordered; it reads SPPPEPPVTVPQPAGDQDNPTNND. N-linked (GlcNAc...) asparagine glycosylation is present at Asn-281. The chain crosses the membrane as a helical span at residues 293-313; the sequence is AITVPTVIAILILLVLGFVLF. The Cytoplasmic segment spans residues 314–667; that stretch reads RRRKSYQRTK…YTSKSSSFSS (354 aa). Residues 350–629 enclose the Protein kinase domain; sequence FSTSNKLGEG…IILMLTSNTI (280 aa). Residues 356 to 364 and Lys-378 contribute to the ATP site; that span reads LGEGGFGAV. Tyr-423 bears the Phosphotyrosine mark. The active-site Proton acceptor is Asp-475. Ser-479 bears the Phosphoserine mark. Thr-515 carries the post-translational modification Phosphothreonine. Residue Tyr-523 is modified to Phosphotyrosine.

This sequence belongs to the protein kinase superfamily. Ser/Thr protein kinase family. CRK subfamily. As to expression, detected in root, stem, leaf and flower.

Its subcellular location is the membrane. It carries out the reaction L-seryl-[protein] + ATP = O-phospho-L-seryl-[protein] + ADP + H(+). The enzyme catalyses L-threonyl-[protein] + ATP = O-phospho-L-threonyl-[protein] + ADP + H(+). The protein is Cysteine-rich receptor-like protein kinase 11 (CRK11) of Arabidopsis thaliana (Mouse-ear cress).